We begin with the raw amino-acid sequence, 341 residues long: MNNYLRKLVEGQHLTEEEMYKAGLLLLNENILESEIAAFLVLLKAKGETAEEIYGLVRALREKALPFSNHIQGAMDNCGTGGDGAQTFNISTTSAFVLAGAGVKVAKHGNRAVSSKTGSADLLEELGVNISSTPNEIDYLLKHVGIAFLFAPAMHPALKRIMKIRKELNVPTIFNLIGPLTNPVNLETQFVGIYKRDMLLPVAQVLQKLGRKQALVVNGSGFLDEASLQGENHVVILKDNEIVETSIEPEKYGFSIVKNEEIRGGNSKENAKITLGVLSGEKSVYRDTVLFNAGLALFANGKAKTIEEGITLAAHSIDSGKALAKLNLLIAASNEKLERVN.

5-phospho-alpha-D-ribose 1-diphosphate-binding positions include glycine 79, glycine 82 to aspartate 83, threonine 87, asparagine 89 to threonine 92, lysine 107 to serine 115, and serine 119. Glycine 79 contacts anthranilate. A Mg(2+)-binding site is contributed by serine 91. Asparagine 110 lines the anthranilate pocket. Arginine 165 serves as a coordination point for anthranilate. Mg(2+)-binding residues include aspartate 224 and glutamate 225.

The protein belongs to the anthranilate phosphoribosyltransferase family. Homodimer. The cofactor is Mg(2+).

The enzyme catalyses N-(5-phospho-beta-D-ribosyl)anthranilate + diphosphate = 5-phospho-alpha-D-ribose 1-diphosphate + anthranilate. It functions in the pathway amino-acid biosynthesis; L-tryptophan biosynthesis; L-tryptophan from chorismate: step 2/5. Its function is as follows. Catalyzes the transfer of the phosphoribosyl group of 5-phosphorylribose-1-pyrophosphate (PRPP) to anthranilate to yield N-(5'-phosphoribosyl)-anthranilate (PRA). In Bacillus thuringiensis subsp. konkukian (strain 97-27), this protein is Anthranilate phosphoribosyltransferase.